A 149-amino-acid chain; its full sequence is Myoglobin (149 aa).

The residue at position 2 (threonine 2) is an N-acetylthreonine. The region spanning 2–143 (TEWEHVNKVW…ICSDLETLYK (142 aa)) is the Globin domain. Residue histidine 60 participates in nitrite binding. Histidine 60 contacts O2. Histidine 89 provides a ligand contact to heme b.

This sequence belongs to the globin family. In terms of assembly, monomeric.

It is found in the cytoplasm. It localises to the sarcoplasm. It carries out the reaction Fe(III)-heme b-[protein] + nitric oxide + H2O = Fe(II)-heme b-[protein] + nitrite + 2 H(+). The enzyme catalyses H2O2 + AH2 = A + 2 H2O. Functionally, monomeric heme protein which primary function is to store oxygen and facilitate its diffusion within muscle tissues. Reversibly binds oxygen through a pentacoordinated heme iron and enables its timely and efficient release as needed during periods of heightened demand. Depending on the oxidative conditions of tissues and cells, and in addition to its ability to bind oxygen, it also has a nitrite reductase activity whereby it regulates the production of bioactive nitric oxide. Under stress conditions, like hypoxia and anoxia, it also protects cells against reactive oxygen species thanks to its pseudoperoxidase activity. The sequence is that of Myoglobin (mb) from Heterodontus portusjacksoni (Port Jackson shark).